The chain runs to 353 residues: 3-dehydroquinate synthase (353 aa).

NAD(+) contacts are provided by residues Asp-61–Lys-66, Thr-119–Thr-120, Lys-132, and Lys-141. Zn(2+) is bound by residues Glu-174, His-238, and His-254.

The protein belongs to the sugar phosphate cyclases superfamily. Dehydroquinate synthase family. Co(2+) is required as a cofactor. Zn(2+) serves as cofactor. It depends on NAD(+) as a cofactor.

The protein resides in the cytoplasm. The enzyme catalyses 7-phospho-2-dehydro-3-deoxy-D-arabino-heptonate = 3-dehydroquinate + phosphate. It participates in metabolic intermediate biosynthesis; chorismate biosynthesis; chorismate from D-erythrose 4-phosphate and phosphoenolpyruvate: step 2/7. Its function is as follows. Catalyzes the conversion of 3-deoxy-D-arabino-heptulosonate 7-phosphate (DAHP) to dehydroquinate (DHQ). This chain is 3-dehydroquinate synthase, found in Sulfolobus acidocaldarius (strain ATCC 33909 / DSM 639 / JCM 8929 / NBRC 15157 / NCIMB 11770).